Consider the following 445-residue polypeptide: Argininosuccinate synthase (445 aa).

ATP is bound by residues 17-25 (AFSGGLDTS) and alanine 43. Tyrosine 99 is a binding site for L-citrulline. Residues glycine 129 and threonine 131 each coordinate ATP. Residues threonine 131, asparagine 135, and aspartate 136 each contribute to the L-aspartate site. L-citrulline is bound at residue asparagine 135. Residue aspartate 136 coordinates ATP. 2 residues coordinate L-citrulline: arginine 139 and serine 192. Residue aspartate 194 coordinates ATP. Threonine 201, glutamate 203, and glutamate 280 together coordinate L-citrulline.

It belongs to the argininosuccinate synthase family. Type 2 subfamily. In terms of assembly, homotetramer.

It is found in the cytoplasm. The catalysed reaction is L-citrulline + L-aspartate + ATP = 2-(N(omega)-L-arginino)succinate + AMP + diphosphate + H(+). It participates in amino-acid biosynthesis; L-arginine biosynthesis; L-arginine from L-ornithine and carbamoyl phosphate: step 2/3. The chain is Argininosuccinate synthase from Bordetella bronchiseptica (strain ATCC BAA-588 / NCTC 13252 / RB50) (Alcaligenes bronchisepticus).